We begin with the raw amino-acid sequence, 82 residues long: Sec-independent protein translocase protein TatA (82 aa).

Residues M1–G21 traverse the membrane as a helical segment.

Belongs to the TatA/E family. The Tat system comprises two distinct complexes: a TatABC complex, containing multiple copies of TatA, TatB and TatC subunits, and a separate TatA complex, containing only TatA subunits. Substrates initially bind to the TatABC complex, which probably triggers association of the separate TatA complex to form the active translocon.

It is found in the cell inner membrane. Functionally, part of the twin-arginine translocation (Tat) system that transports large folded proteins containing a characteristic twin-arginine motif in their signal peptide across membranes. TatA could form the protein-conducting channel of the Tat system. The sequence is that of Sec-independent protein translocase protein TatA from Vibrio cholerae serotype O1 (strain ATCC 39315 / El Tor Inaba N16961).